The primary structure comprises 344 residues: ATPase GET3 (344 aa).

An ATP-binding site is contributed by Lys-26 to Thr-33. The active site involves Asp-57. ATP is bound by residues Glu-239 and Asn-266. 2 residues coordinate Zn(2+): Cys-276 and Cys-279.

The protein belongs to the arsA ATPase family. As to quaternary structure, homodimer. Component of the Golgi to ER traffic (GET) complex, which is composed of GET1, GET2 and GET3. Within the complex, GET1 and GET2 form a heterotetramer which is stabilized by phosphatidylinositol binding and which binds to the GET3 homodimer. Interacts with the chloride channel protein GEF1.

Its subcellular location is the cytoplasm. It localises to the endoplasmic reticulum. The protein resides in the golgi apparatus. Functionally, ATPase required for the post-translational delivery of tail-anchored (TA) proteins to the endoplasmic reticulum. Recognizes and selectively binds the transmembrane domain of TA proteins in the cytosol. This complex then targets to the endoplasmic reticulum by membrane-bound receptors GET1 and GET2, where the tail-anchored protein is released for insertion. This process is regulated by ATP binding and hydrolysis. ATP binding drives the homodimer towards the closed dimer state, facilitating recognition of newly synthesized TA membrane proteins. ATP hydrolysis is required for insertion. Subsequently, the homodimer reverts towards the open dimer state, lowering its affinity for the GET1-GET2 receptor, and returning it to the cytosol to initiate a new round of targeting. Cooperates with the HDEL receptor ERD2 to mediate the ATP-dependent retrieval of resident ER proteins that contain a C-terminal H-D-E-L retention signal from the Golgi to the ER. Involved in low-level resistance to the oxyanions arsenite and arsenate, and in heat tolerance. This chain is ATPase GET3, found in Komagataella phaffii (strain GS115 / ATCC 20864) (Yeast).